Here is an 854-residue protein sequence, read N- to C-terminus: Espin (854 aa).

9 ANK repeats span residues 1 to 31 (MALE…GPSL), 35 to 64 (LDAL…LPAA), 69 to 99 (NGAT…RVQD), 103 to 133 (SGAT…DPTA), 137 to 167 (MGAL…GVNA), 171 to 201 (NGAT…DPHA), 205 to 235 (DGMT…SLSE), 239 to 268 (DGAT…EISA), and 271 to 300 (WGGT…ELDV). Phosphoserine is present on residues Ser-338 and Ser-342. Residues 338–349 (SRDPSAELEAKQ) are compositionally biased toward basic and acidic residues. Disordered stretches follow at residues 338–400 (SRDP…CGLS), 415–474 (NPEL…MQTK), 487–713 (KELS…AGFQ), 765–788 (KMQE…SMPA), and 800–832 (EERE…TLGY). The span at 352 to 377 (SGMSSPNTTVSVQPLNFDLSSPTSTL) shows a compositional bias: polar residues. Residues 378-389 (SNYDSCSSSHSS) are compositionally biased toward low complexity. The segment covering 428–463 (PTPPPPPPSFPPPPPPPGTQLPPPPPGYPAPKPPVG) has biased composition (pro residues). Basic and acidic residues predominate over residues 487–505 (KELSSCDGHDGLRRQDSSR). Ser-515 is modified (phosphoserine). Over residues 595-620 (LPPPPPPPPPPLPEAASSPPPAPPLP) the composition is skewed to pro residues. Residues 633-642 (SSSSTGSTKS) are compositionally biased toward low complexity. Composition is skewed to polar residues over residues 643–652 (FNMMSPTGDN) and 667–678 (PTPQSKGLTTVF). At Ser-647 the chain carries Phosphoserine. Residues 651 to 668 (DNSELLAEIKAGKSLKPT) enclose the WH2 domain. Ser-690 and Ser-696 each carry phosphoserine. The segment covering 692 to 703 (LPSVSPALSPVR) has biased composition (low complexity). The stretch at 756 to 830 (QVMVRKMQLK…KEQSEKLRTL (75 aa)) forms a coiled coil.

Monomer. Binds F-actin in a Ca(2+)-resistant fashion. Interacts (via N-terminus) with BAIAP2 (via SH3-domain). Interacts with PFN2. Interacts with MYO3A (via C-terminus). Interacts with MYO3B (via C-terminus).

The protein resides in the cytoplasm. It localises to the cytoskeleton. Its subcellular location is the cell projection. It is found in the stereocilium. The protein localises to the microvillus. Multifunctional actin-bundling protein. Plays a major role in regulating the organization, dimension, dynamics and signaling capacities of the actin filament-rich microvilli in the mechanosensory and chemosensory cells. Required for the assembly and stabilization of the stereociliary parallel actin bundles. Plays a crucial role in the formation and maintenance of inner ear hair cell stereocilia. Involved in the elongation of actin in stereocilia. In extrastriolar hair cells, required for targeting MYO3B to stereocilia tips, and for regulation of stereocilia diameter and staircase formation. The sequence is that of Espin (ESPN) from Homo sapiens (Human).